Here is a 476-residue protein sequence, read N- to C-terminus: Glycogen synthase (476 aa).

Lysine 15 serves as a coordination point for ADP-alpha-D-glucose.

This sequence belongs to the glycosyltransferase 1 family. Bacterial/plant glycogen synthase subfamily.

It catalyses the reaction [(1-&gt;4)-alpha-D-glucosyl](n) + ADP-alpha-D-glucose = [(1-&gt;4)-alpha-D-glucosyl](n+1) + ADP + H(+). The protein operates within glycan biosynthesis; glycogen biosynthesis. Its function is as follows. Synthesizes alpha-1,4-glucan chains using ADP-glucose. The polypeptide is Glycogen synthase (Haemophilus influenzae (strain PittEE)).